The sequence spans 426 residues: 3-phosphoshikimate 1-carboxyvinyltransferase (426 aa).

3-phosphoshikimate is bound by residues Lys-22, Ser-23, and Arg-27. Lys-22 is a phosphoenolpyruvate binding site. Residues Gly-96 and Arg-124 each coordinate phosphoenolpyruvate. Positions 170, 171, 172, 198, 314, 337, and 341 each coordinate 3-phosphoshikimate. Gln-172 contacts phosphoenolpyruvate. Asp-314 serves as the catalytic Proton acceptor. Phosphoenolpyruvate is bound by residues Arg-345, Arg-387, and Lys-412.

This sequence belongs to the EPSP synthase family. As to quaternary structure, monomer.

It is found in the cytoplasm. It carries out the reaction 3-phosphoshikimate + phosphoenolpyruvate = 5-O-(1-carboxyvinyl)-3-phosphoshikimate + phosphate. The protein operates within metabolic intermediate biosynthesis; chorismate biosynthesis; chorismate from D-erythrose 4-phosphate and phosphoenolpyruvate: step 6/7. Catalyzes the transfer of the enolpyruvyl moiety of phosphoenolpyruvate (PEP) to the 5-hydroxyl of shikimate-3-phosphate (S3P) to produce enolpyruvyl shikimate-3-phosphate and inorganic phosphate. The protein is 3-phosphoshikimate 1-carboxyvinyltransferase of Shewanella baltica (strain OS155 / ATCC BAA-1091).